A 173-amino-acid polypeptide reads, in one-letter code: ATP synthase subunit b (173 aa).

Residues isoleucine 19–proline 39 form a helical membrane-spanning segment.

This sequence belongs to the ATPase B chain family. In terms of assembly, F-type ATPases have 2 components, F(1) - the catalytic core - and F(0) - the membrane proton channel. F(1) has five subunits: alpha(3), beta(3), gamma(1), delta(1), epsilon(1). F(0) has three main subunits: a(1), b(2) and c(10-14). The alpha and beta chains form an alternating ring which encloses part of the gamma chain. F(1) is attached to F(0) by a central stalk formed by the gamma and epsilon chains, while a peripheral stalk is formed by the delta and b chains.

It localises to the cell membrane. Its function is as follows. F(1)F(0) ATP synthase produces ATP from ADP in the presence of a proton or sodium gradient. F-type ATPases consist of two structural domains, F(1) containing the extramembraneous catalytic core and F(0) containing the membrane proton channel, linked together by a central stalk and a peripheral stalk. During catalysis, ATP synthesis in the catalytic domain of F(1) is coupled via a rotary mechanism of the central stalk subunits to proton translocation. Functionally, component of the F(0) channel, it forms part of the peripheral stalk, linking F(1) to F(0). The polypeptide is ATP synthase subunit b (Bifidobacterium longum (strain NCC 2705)).